A 393-amino-acid chain; its full sequence is Glutamyl-tRNA reductase (393 aa).

Substrate contacts are provided by residues 47-50 (TCSR), serine 98, 103-105 (ETD), and glutamine 109. The active-site Nucleophile is the cysteine 48. Position 177-182 (177-182 (GAGAVG)) interacts with NADP(+).

Belongs to the glutamyl-tRNA reductase family. In terms of assembly, homodimer.

It carries out the reaction (S)-4-amino-5-oxopentanoate + tRNA(Glu) + NADP(+) = L-glutamyl-tRNA(Glu) + NADPH + H(+). It functions in the pathway porphyrin-containing compound metabolism; protoporphyrin-IX biosynthesis; 5-aminolevulinate from L-glutamyl-tRNA(Glu): step 1/2. In terms of biological role, catalyzes the NADPH-dependent reduction of glutamyl-tRNA(Glu) to glutamate 1-semialdehyde (GSA). The polypeptide is Glutamyl-tRNA reductase (Pyrobaculum neutrophilum (strain DSM 2338 / JCM 9278 / NBRC 100436 / V24Sta) (Thermoproteus neutrophilus)).